The sequence spans 468 residues: MGARDVIYAMEKWFPEVERPKKHVPLKEKFVWTGLALVLYYVLAEIPVYGIPKKIQDYFQFLRVVLAGRNGSILTLGIGPIVTAGIILQLLVGSELIRLDLANPEDRRFYQALQRVFSVFMCFFEAAIWVLGGAFGRVGVDVTYTIATLMIIQLALGGIILIVLDELVSKWGIGSGISLFIAAGVSQRILTRSLNPLTDPNIIDPLTGKPAIVGAIPYFIQHILDGDLKGALYRGGSAPDMIAVTATIIVFLVVVYFESMRVEIPLGYRGVTIRGRYPIKFLYVSNIPIILTFALYANIQLWARVLDRFGHPWLGRFDPVTGNPIGGFVLYVIPPRNIFTVIDNPVRAIIYLILTIIFSLLFGFLWVELTGLDARTIARQLQRAGLQIPGFRRDPRTLERVLQKYIPYVTFWGSLTVALISVLADFLGALGTGTGILLTVGILYRFYEEIAREQITEMFPALRRLFKG.

The Cytoplasmic portion of the chain corresponds to 1–20 (MGARDVIYAMEKWFPEVERP). Residues 21 to 47 (KKHVPLKEKFVWTGLALVLYYVLAEIP) form a helical membrane-spanning segment. Over 48–58 (VYGIPKKIQDY) the chain is Extracellular. The helical intramembrane region spans 59 to 66 (FQFLRVVL). Residues 59–87 (FQFLRVVLAGRNGSILTLGIGPIVTAGII) form a discontinuously helical membrane-spanning segment. Residues 67–78 (AGRNGSILTLGI) lie within the membrane without spanning it. Residues 79–87 (GPIVTAGII) constitute an intramembrane region (helical). Topologically, residues 88–108 (LQLLVGSELIRLDLANPEDRR) are cytoplasmic. A helical transmembrane segment spans residues 109–133 (FYQALQRVFSVFMCFFEAAIWVLGG). Topologically, residues 134-144 (AFGRVGVDVTY) are extracellular. Residues 145–169 (TIATLMIIQLALGGIILIVLDELVS) traverse the membrane as a helical segment. Topologically, residues 170–175 (KWGIGS) are cytoplasmic. Residues 176 to 194 (GISLFIAAGVSQRILTRSL) form a helical membrane-spanning segment. Over 195–239 (NPLTDPNIIDPLTGKPAIVGAIPYFIQHILDGDLKGALYRGGSAP) the chain is Extracellular. The helical transmembrane segment at 240 to 261 (DMIAVTATIIVFLVVVYFESMR) threads the bilayer. Topologically, residues 262–285 (VEIPLGYRGVTIRGRYPIKFLYVS) are cytoplasmic. A helical transmembrane segment spans residues 286-307 (NIPIILTFALYANIQLWARVLD). The Extracellular segment spans residues 308–346 (RFGHPWLGRFDPVTGNPIGGFVLYVIPPRNIFTVIDNPV). The chain crosses the membrane as a helical span at residues 347-366 (RAIIYLILTIIFSLLFGFLW). The Cytoplasmic segment spans residues 367-409 (VELTGLDARTIARQLQRAGLQIPGFRRDPRTLERVLQKYIPYV). The helical transmembrane segment at 410–428 (TFWGSLTVALISVLADFLG) threads the bilayer. Over 429–431 (ALG) the chain is Extracellular. Residues 432–446 (TGTGILLTVGILYRF) form a helical membrane-spanning segment. Residues 447–468 (YEEIAREQITEMFPALRRLFKG) are Cytoplasmic-facing.

This sequence belongs to the SecY/SEC61-alpha family. Component of the Sec protein translocase complex. Heterotrimer consisting of alpha (SecY), beta (SecG) and gamma (SecE) subunits. The heterotrimers can form oligomers, although 1 heterotrimer is thought to be able to translocate proteins. Interacts with the ribosome. May interact with SecDF, and other proteins may be involved.

It localises to the cell membrane. Functionally, the central subunit of the protein translocation channel SecYEG. Consists of two halves formed by TMs 1-5 and 6-10. These two domains form a lateral gate at the front which open onto the bilayer between TMs 2 and 7, and are clamped together by SecE at the back. The channel is closed by both a pore ring composed of hydrophobic SecY resides and a short helix (helix 2A) on the extracellular side of the membrane which forms a plug. The plug probably moves laterally to allow the channel to open. The ring and the pore may move independently. The chain is Protein translocase subunit SecY from Pyrococcus horikoshii (strain ATCC 700860 / DSM 12428 / JCM 9974 / NBRC 100139 / OT-3).